A 375-amino-acid polypeptide reads, in one-letter code: Alanine racemase (375 aa).

The active-site Proton acceptor; specific for D-alanine is K45. N6-(pyridoxal phosphate)lysine is present on K45. R141 is a substrate binding site. Y270 serves as the catalytic Proton acceptor; specific for L-alanine. M318 contacts substrate.

The protein belongs to the alanine racemase family. It depends on pyridoxal 5'-phosphate as a cofactor.

It catalyses the reaction L-alanine = D-alanine. It functions in the pathway amino-acid biosynthesis; D-alanine biosynthesis; D-alanine from L-alanine: step 1/1. Catalyzes the interconversion of L-alanine and D-alanine. May also act on other amino acids. The sequence is that of Alanine racemase (alr) from Pseudoalteromonas atlantica (strain T6c / ATCC BAA-1087).